Consider the following 128-residue polypeptide: MDADDFGKKDLENGNESPKKPIFMKDWKNSQPNEQGRWLHLDARMNRNIEDLEISNYNLRLMNEQLESQLLSLNVKPVVSFAEQGKSSESKTDEEGFILNSASNVLDNFISIVNELVQHAEDVLDDLG.

Residues 1–28 (MDADDFGKKDLENGNESPKKPIFMKDWK) show a composition bias toward basic and acidic residues. The disordered stretch occupies residues 1–30 (MDADDFGKKDLENGNESPKKPIFMKDWKNS).

The protein localises to the cytoplasm. Its subcellular location is the nucleus. This is an uncharacterized protein from Schizosaccharomyces pombe (strain 972 / ATCC 24843) (Fission yeast).